Consider the following 97-residue polypeptide: MNGIRRIVLDILKPHEPKITDMALKLTSLSNIDGVNITVYEIDKETENVKVTIEGNNLDFDEIQEIIESLGGTIHSIDEVVAGKKIIEEVRTPQDRH.

This is an uncharacterized protein from Methanocaldococcus jannaschii (strain ATCC 43067 / DSM 2661 / JAL-1 / JCM 10045 / NBRC 100440) (Methanococcus jannaschii).